We begin with the raw amino-acid sequence, 354 residues long: Homeobox protein Nkx-2.4 (354 aa).

The homeobox DNA-binding region spans 189-248 (RRKRRVLFSQAQVYELERRFKQQKYLSAPEREHLASMIHLTPTQVKIWFQNHRYKMKRQA). The tract at residues 246–329 (RQAKDKAAQQ…PALHGPGGGL (84 aa)) is disordered. Over residues 263 to 272 (GPPPPPPPSP) the composition is skewed to pro residues.

It belongs to the NK-2 homeobox family.

The protein resides in the nucleus. Its function is as follows. Probable transcription factor. This is Homeobox protein Nkx-2.4 (NKX2-4) from Homo sapiens (Human).